The chain runs to 387 residues: MEQLKEGNSYFVDEQYDEALKCYDKACLELSNNAEAFFKRSQCHSKLSNLKEALSDINTSIKLDSNNSKYYLKKGQLCFELEEFDTALKTFEKGQSIDSENSSFKTWIRKSKAEIQSNPTTTTTTTPTPTPTPTPAPQPVTTTTNPTPIPTTSNTTTTTNNNNNNNNNNNNNNNNNNTTTDSTTTKLPIPSSGNKVRHEWYQTETHVVLTIFAKFVTASNSKINLTSKSVNISFPLANGSEFLFEMDLFDPIVDKDSTIHYYSTKVEIKMKKSRAIKWDTLEFTDKSGPVGLMDQISSSPAVPSPYASKKDWDKLPNEPEEKLEGDQALNKIFRDIFSKGSEDQQRAMMKSFTESGGTVLSTNWDEVGSKKVVGEPPKGLEFKQYEK.

3 TPR repeats span residues 1–34 (MEQL…SNNA), 36–67 (AFFK…DSNN), and 68–101 (SKYY…DSEN). Disordered regions lie at residues 110-193 (KSKA…PSSG) and 299-323 (SPAV…EEKL). Over residues 118-127 (NPTTTTTTTP) the composition is skewed to low complexity. Residues 128–138 (TPTPTPTPAPQ) show a composition bias toward pro residues. Positions 139 to 185 (PVTTTTNPTPIPTTSNTTTTTNNNNNNNNNNNNNNNNNNTTTDSTTT) are enriched in low complexity. The CS domain maps to 193-282 (GNKVRHEWYQ…SRAIKWDTLE (90 aa)). The region spanning 301-387 (AVPSPYASKK…KGLEFKQYEK (87 aa)) is the SGS domain. Residues 308–323 (SKKDWDKLPNEPEEKL) show a composition bias toward basic and acidic residues.

The protein belongs to the SGT1 family.

Functionally, may play a role in ubiquitination and subsequent proteasomal degradation of target proteins. In Dictyostelium discoideum (Social amoeba), this protein is Protein SGT1 homolog (sugt1).